Reading from the N-terminus, the 421-residue chain is Serine hydroxymethyltransferase (421 aa).

(6S)-5,6,7,8-tetrahydrofolate contacts are provided by residues leucine 123 and 127-129 (GHL). Lysine 232 carries the post-translational modification N6-(pyridoxal phosphate)lysine.

It belongs to the SHMT family. As to quaternary structure, homodimer. The cofactor is pyridoxal 5'-phosphate.

The protein localises to the cytoplasm. The enzyme catalyses (6R)-5,10-methylene-5,6,7,8-tetrahydrofolate + glycine + H2O = (6S)-5,6,7,8-tetrahydrofolate + L-serine. It participates in one-carbon metabolism; tetrahydrofolate interconversion. Its pathway is amino-acid biosynthesis; glycine biosynthesis; glycine from L-serine: step 1/1. Functionally, catalyzes the reversible interconversion of serine and glycine with tetrahydrofolate (THF) serving as the one-carbon carrier. This reaction serves as the major source of one-carbon groups required for the biosynthesis of purines, thymidylate, methionine, and other important biomolecules. Also exhibits THF-independent aldolase activity toward beta-hydroxyamino acids, producing glycine and aldehydes, via a retro-aldol mechanism. The protein is Serine hydroxymethyltransferase of Ehrlichia ruminantium (strain Gardel).